A 65-amino-acid polypeptide reads, in one-letter code: Large ribosomal subunit protein bL35 (65 aa).

This sequence belongs to the bacterial ribosomal protein bL35 family.

The chain is Large ribosomal subunit protein bL35 from Proteus mirabilis (strain HI4320).